The chain runs to 467 residues: Uronate isomerase (467 aa).

The protein belongs to the metallo-dependent hydrolases superfamily. Uronate isomerase family.

It carries out the reaction D-glucuronate = D-fructuronate. It catalyses the reaction aldehydo-D-galacturonate = keto-D-tagaturonate. It functions in the pathway carbohydrate metabolism; pentose and glucuronate interconversion. The chain is Uronate isomerase from Haemophilus influenzae (strain PittGG).